A 359-amino-acid polypeptide reads, in one-letter code: MSSSPSLNTWSDALSGLSIGWFPLGLVIIAAIPLVFIALYALTYGVYGERKISAFMQDRLGPMEVGIWGLLQTLADILKLLQKEDIVPKLADKFLFVIGPGILFVGSFLAFAVLPFGPAFIGADLNVGLFYAVGIVAIEVVGILAAGWGSNNKWALYGAVRSVAQIVSYEIPASIALLCAAMLAGTLSMQQITMMQAGPGGFMHWFLFTNPIAWLPFLIYFISSLAETNRAPFDIPEAESELVAGYFTEYSGMKFAVIFLAEYGRMFMVSAIISIAFLGGWTSPLPNIGGLELNTMTSGPVWGAFWIIMKGFFFIFVQMWLRWTLPRLRVDQLMYLCWKVLTPFSLIAFVLTAIWVINH.

Transmembrane regions (helical) follow at residues 19–39, 94–114, 127–147, 166–186, 202–222, 266–286, 301–321, and 337–357; these read IGWF…FIAL, FLFV…FAVL, VGLF…LAAG, IVSY…LAGT, FMHW…IYFI, MFMV…SPLP, VWGA…QMWL, and CWKV…IWVI.

Belongs to the complex I subunit 1 family. NDH-1 is composed of 14 different subunits. Subunits NuoA, H, J, K, L, M, N constitute the membrane sector of the complex.

Its subcellular location is the cell inner membrane. The catalysed reaction is a quinone + NADH + 5 H(+)(in) = a quinol + NAD(+) + 4 H(+)(out). NDH-1 shuttles electrons from NADH, via FMN and iron-sulfur (Fe-S) centers, to quinones in the respiratory chain. The immediate electron acceptor for the enzyme in this species is believed to be ubiquinone. Couples the redox reaction to proton translocation (for every two electrons transferred, four hydrogen ions are translocated across the cytoplasmic membrane), and thus conserves the redox energy in a proton gradient. This subunit may bind ubiquinone. The polypeptide is NADH-quinone oxidoreductase subunit H (Chlorobaculum parvum (strain DSM 263 / NCIMB 8327) (Chlorobium vibrioforme subsp. thiosulfatophilum)).